We begin with the raw amino-acid sequence, 453 residues long: tRNA modification GTPase MnmE (453 aa).

Positions 22, 79, and 119 each coordinate (6S)-5-formyl-5,6,7,8-tetrahydrofolate. Residues 215–376 enclose the TrmE-type G domain; it reads GMKVVIAGRP…LRNHLKECMG (162 aa). Asn225 contributes to the K(+) binding site. GTP-binding positions include 225–230, 244–250, 269–272, and 334–337; these read NAGKSS, TDIAGTT, DTAG, and NKAD. A Mg(2+)-binding site is contributed by Ser229. K(+) is bound by residues Thr244, Ile246, and Thr249. Thr250 lines the Mg(2+) pocket. Lys453 lines the (6S)-5-formyl-5,6,7,8-tetrahydrofolate pocket.

This sequence belongs to the TRAFAC class TrmE-Era-EngA-EngB-Septin-like GTPase superfamily. TrmE GTPase family. In terms of assembly, homodimer. Heterotetramer of two MnmE and two MnmG subunits. It depends on K(+) as a cofactor.

The protein resides in the cytoplasm. In terms of biological role, exhibits a very high intrinsic GTPase hydrolysis rate. Involved in the addition of a carboxymethylaminomethyl (cmnm) group at the wobble position (U34) of certain tRNAs, forming tRNA-cmnm(5)s(2)U34. This Vibrio parahaemolyticus serotype O3:K6 (strain RIMD 2210633) protein is tRNA modification GTPase MnmE.